Here is a 214-residue protein sequence, read N- to C-terminus: Alpha-S1-casein (214 aa).

Positions 1 to 15 (MKLLILTCLVAVALA) are cleaved as a signal peptide. Phosphoserine; in allele A is present on serine 27. The residue at position 56 (serine 56) is a Phosphoserine; in allele C. Serine 61 and serine 63 each carry phosphoserine. Residues 69 to 91 (MEDAKQMKAGSSSSSEEIVPNSA) are disordered. Serine 79 carries the phosphoserine; in alleles A and C modification. Serine 80 is modified (phosphoserine). Serine 81 is subject to Phosphoserine; in alleles A and C. Serine 82 carries the post-translational modification Phosphoserine. The residue at position 83 (serine 83) is a Phosphoserine; in alleles A and C. A Phosphoserine modification is found at serine 90. Residues 105-111 (RYLGYLE) are opioid-like peptide sequence. At serine 130 the chain carries Phosphoserine.

It belongs to the alpha-casein family. In terms of tissue distribution, mammary gland specific. Secreted in milk.

It is found in the secreted. Important role in the capacity of milk to transport calcium phosphate. The chain is Alpha-S1-casein (CSN1S1) from Ovis aries (Sheep).